We begin with the raw amino-acid sequence, 117 residues long: DNA-directed RNA polymerase subunit omega (117 aa).

Belongs to the RNA polymerase subunit omega family. The RNAP catalytic core consists of 2 alpha, 1 beta, 1 beta' and 1 omega subunit. When a sigma factor is associated with the core the holoenzyme is formed, which can initiate transcription.

It carries out the reaction RNA(n) + a ribonucleoside 5'-triphosphate = RNA(n+1) + diphosphate. Promotes RNA polymerase assembly. Latches the N- and C-terminal regions of the beta' subunit thereby facilitating its interaction with the beta and alpha subunits. This is DNA-directed RNA polymerase subunit omega from Cereibacter sphaeroides (strain ATCC 17025 / ATH 2.4.3) (Rhodobacter sphaeroides).